A 302-amino-acid chain; its full sequence is Methylsterol monooxygenase erg25A (302 aa).

N-linked (GlcNAc...) asparagine glycosylation occurs at Asn5. 3 helical membrane passes run 47–67 (NIVATATGIITFLAHEIIYFS), 105–125 (YILLIHFVVELPLIVLFHPMM), and 132–152 (FTIPFPDLRTLTAQIIIFFLL). The 137-residue stretch at 147–283 (IIFFLLEDTY…FRHWDVLMGT (137 aa)) folds into the Fatty acid hydroxylase domain. The Histidine box-1 signature appears at 161–165 (HRAMH). Residues 174 to 178 (HRIHH) carry the Histidine box-2 motif. The helical transmembrane segment at 193–213 (PWETLLLGLGTIGPPLLLALM) threads the bilayer. The Histidine box-3 signature appears at 258–264 (WHDDHHR). An N-linked (GlcNAc...) asparagine glycan is attached at Asn269.

It belongs to the sterol desaturase family. It depends on Fe cation as a cofactor.

It is found in the endoplasmic reticulum membrane. It functions in the pathway steroid metabolism; ergosterol biosynthesis. Sterol-C4-methyl oxidase; part of the third module of ergosterol biosynthesis pathway that includes the late steps of the pathway. Erg25A is a catalytic component of the C-4 demethylation complex that catalyzes the conversion of 4,4-dimethylfecosterol into fecosterol via 4-methylfecosterol. The third module or late pathway involves the ergosterol synthesis itself through consecutive reactions that mainly occur in the endoplasmic reticulum (ER) membrane. Firstly, the squalene synthase erg9 catalyzes the condensation of 2 farnesyl pyrophosphate moieties to form squalene, which is the precursor of all steroids. Squalene synthase is crucial for balancing the incorporation of farnesyl diphosphate (FPP) into sterol and nonsterol isoprene synthesis. Secondly, squalene is converted into lanosterol by the consecutive action of the squalene epoxidase erg1 and the lanosterol synthase erg7. Then, the delta(24)-sterol C-methyltransferase erg6 methylates lanosterol at C-24 to produce eburicol. Eburicol is the substrate of the sterol 14-alpha demethylase encoded by cyp51A and cyp51B, to yield 4,4,24-trimethyl ergosta-8,14,24(28)-trienol. The C-14 reductase erg24 then reduces the C14=C15 double bond which leads to 4,4-dimethylfecosterol. A sequence of further demethylations at C-4, involving the C-4 demethylation complex containing the C-4 methylsterol oxidases erg25A or erg25B, the sterol-4-alpha-carboxylate 3-dehydrogenase erg26 and the 3-keto-steroid reductase erg27, leads to the production of fecosterol via 4-methylfecosterol. The C-8 sterol isomerase erg2 then catalyzes the reaction which results in unsaturation at C-7 in the B ring of sterols and thus converts fecosterol to episterol. The sterol-C5-desaturase erg3B then catalyzes the introduction of a C-5 double bond in the B ring to produce 5-dehydroepisterol. The 2 other sterol-C5-desaturases, erg3A and erg3C, seem to be less important in ergosterol biosynthesis. The C-22 sterol desaturase erg5 further converts 5-dehydroepisterol into ergosta-5,7,22,24(28)-tetraen-3beta-ol by forming the C-22(23) double bond in the sterol side chain. Finally, ergosta-5,7,22,24(28)-tetraen-3beta-ol is substrate of the C-24(28) sterol reductases erg4A and erg4B to produce ergosterol. Possible alternative sterol biosynthetic pathways might exist from fecosterol to ergosterol, depending on the activities of the erg3 isoforms. The sequence is that of Methylsterol monooxygenase erg25A from Aspergillus fumigatus (strain ATCC MYA-4609 / CBS 101355 / FGSC A1100 / Af293) (Neosartorya fumigata).